Reading from the N-terminus, the 353-residue chain is Phosphate acyltransferase (353 aa).

The protein belongs to the PlsX family. Homodimer. Probably interacts with PlsY.

The protein localises to the cytoplasm. It carries out the reaction a fatty acyl-[ACP] + phosphate = an acyl phosphate + holo-[ACP]. It participates in lipid metabolism; phospholipid metabolism. Its function is as follows. Catalyzes the reversible formation of acyl-phosphate (acyl-PO(4)) from acyl-[acyl-carrier-protein] (acyl-ACP). This enzyme utilizes acyl-ACP as fatty acyl donor, but not acyl-CoA. In Afipia carboxidovorans (strain ATCC 49405 / DSM 1227 / KCTC 32145 / OM5) (Oligotropha carboxidovorans), this protein is Phosphate acyltransferase.